Consider the following 67-residue polypeptide: Protein AaeX (67 aa).

The next 2 helical transmembrane spans lie at 3 to 23 (LFPV…ELLL) and 43 to 63 (FVWH…YLIS).

This sequence belongs to the AaeX family.

It is found in the cell membrane. The protein is Protein AaeX of Salmonella agona (strain SL483).